A 96-amino-acid chain; its full sequence is Nucleoid-associated protein TC_0612 (96 aa).

This sequence belongs to the YbaB/EbfC family. Homodimer.

The protein resides in the cytoplasm. The protein localises to the nucleoid. Its function is as follows. Binds to DNA and alters its conformation. May be involved in regulation of gene expression, nucleoid organization and DNA protection. This chain is Nucleoid-associated protein TC_0612, found in Chlamydia muridarum (strain MoPn / Nigg).